Here is a 757-residue protein sequence, read N- to C-terminus: 5-methyltetrahydropteroyltriglutamate--homocysteine methyltransferase (757 aa).

5-methyltetrahydropteroyltri-L-glutamate contacts are provided by residues 17–20 and Lys-117; that span reads RELK. L-homocysteine is bound by residues 432 to 434 and Glu-485; that span reads IGS. L-methionine-binding positions include 432–434 and Glu-485; that span reads IGS. 5-methyltetrahydropteroyltri-L-glutamate-binding positions include 516–517 and Trp-562; that span reads RC. Asp-600 is a binding site for L-homocysteine. Residue Asp-600 participates in L-methionine binding. Position 606 (Glu-606) interacts with 5-methyltetrahydropteroyltri-L-glutamate. Residues His-642, Cys-644, and Glu-666 each contribute to the Zn(2+) site. The active-site Proton donor is His-695. Cys-727 is a binding site for Zn(2+).

The protein belongs to the vitamin-B12 independent methionine synthase family. Requires Zn(2+) as cofactor.

The enzyme catalyses 5-methyltetrahydropteroyltri-L-glutamate + L-homocysteine = tetrahydropteroyltri-L-glutamate + L-methionine. Its pathway is amino-acid biosynthesis; L-methionine biosynthesis via de novo pathway; L-methionine from L-homocysteine (MetE route): step 1/1. Functionally, catalyzes the transfer of a methyl group from 5-methyltetrahydrofolate to homocysteine resulting in methionine formation. This Erwinia tasmaniensis (strain DSM 17950 / CFBP 7177 / CIP 109463 / NCPPB 4357 / Et1/99) protein is 5-methyltetrahydropteroyltriglutamate--homocysteine methyltransferase.